The primary structure comprises 257 residues: uncharacterized protein (257 aa).

An N-terminal signal peptide occupies residues 1-22 (MIHSKRLRLWLYLVLLAVFIGA). Cysteine 23 carries N-palmitoyl cysteine lipidation. Cysteine 23 is lipidated: S-diacylglycerol cysteine.

The protein belongs to the staphylococcal tandem lipoprotein family.

Its subcellular location is the cell membrane. This is an uncharacterized protein from Staphylococcus aureus (strain NCTC 8325 / PS 47).